The chain runs to 328 residues: Flotillin-like protein FloA (328 aa).

2 helical membrane passes run 1-21 and 26-46; these read MFGL…LVLF and VGLW…TLVG.

It belongs to the flotillin-like FloA family. In terms of assembly, homooligomerizes.

The protein localises to the cell membrane. The protein resides in the membrane raft. In terms of biological role, found in functional membrane microdomains (FMM) that may be equivalent to eukaryotic membrane rafts. FMMs are highly dynamic and increase in number as cells age. Flotillins are thought to be important factors in membrane fluidity. The sequence is that of Flotillin-like protein FloA from Staphylococcus haemolyticus (strain JCSC1435).